The primary structure comprises 161 residues: MTIAVFPGSFDPLTNGHVDLITRASRMFDQLIVTVGKNTSKQGLFTTSERVAFIEAAIAALPNVTVQVEQGLTVDFMKSVQATVLVRGIRNSTDFEYEQGIANLNRHLAPQVDTACLMADPQYQYVSSSLLKEVARFGGDLKQLVPSMVAKAMVARLEGDH.

Ser-9 contacts substrate. Residues 9–10 (SF) and His-17 contribute to the ATP site. Positions 41, 73, and 87 each coordinate substrate. ATP-binding positions include 88 to 90 (GIR), Glu-98, and 123 to 129 (YQYVSSS).

Belongs to the bacterial CoaD family. As to quaternary structure, homohexamer. The cofactor is Mg(2+).

Its subcellular location is the cytoplasm. It carries out the reaction (R)-4'-phosphopantetheine + ATP + H(+) = 3'-dephospho-CoA + diphosphate. Its pathway is cofactor biosynthesis; coenzyme A biosynthesis; CoA from (R)-pantothenate: step 4/5. Reversibly transfers an adenylyl group from ATP to 4'-phosphopantetheine, yielding dephospho-CoA (dPCoA) and pyrophosphate. This is Phosphopantetheine adenylyltransferase from Levilactobacillus brevis (strain ATCC 367 / BCRC 12310 / CIP 105137 / JCM 1170 / LMG 11437 / NCIMB 947 / NCTC 947) (Lactobacillus brevis).